A 692-amino-acid polypeptide reads, in one-letter code: Elongation factor G (692 aa).

In terms of domain architecture, tr-type G spans 8–282 (ERTRNIGIMA…AIVYYLPSPV (275 aa)). GTP contacts are provided by residues 17–24 (AHIDAGKT), 81–85 (DTPGH), and 135–138 (NKMD).

Belongs to the TRAFAC class translation factor GTPase superfamily. Classic translation factor GTPase family. EF-G/EF-2 subfamily.

The protein resides in the cytoplasm. Its function is as follows. Catalyzes the GTP-dependent ribosomal translocation step during translation elongation. During this step, the ribosome changes from the pre-translocational (PRE) to the post-translocational (POST) state as the newly formed A-site-bound peptidyl-tRNA and P-site-bound deacylated tRNA move to the P and E sites, respectively. Catalyzes the coordinated movement of the two tRNA molecules, the mRNA and conformational changes in the ribosome. This Carboxydothermus hydrogenoformans (strain ATCC BAA-161 / DSM 6008 / Z-2901) protein is Elongation factor G.